A 1242-amino-acid chain; its full sequence is ATP-dependent helicase/nuclease subunit A (1242 aa).

The UvrD-like helicase ATP-binding domain occupies 12–487 (SRWTDEQWKA…IDLASNFRSR (476 aa)). 33–40 (AAAGSGKT) contacts ATP. The region spanning 514–808 (AAQLKYGADY…RVMTIHSSKG (295 aa)) is the UvrD-like helicase C-terminal domain.

The protein belongs to the helicase family. AddA subfamily. As to quaternary structure, heterodimer of AddA and AddB/RexB. It depends on Mg(2+) as a cofactor.

The enzyme catalyses Couples ATP hydrolysis with the unwinding of duplex DNA by translocating in the 3'-5' direction.. It catalyses the reaction ATP + H2O = ADP + phosphate + H(+). The heterodimer acts as both an ATP-dependent DNA helicase and an ATP-dependent, dual-direction single-stranded exonuclease. Recognizes the chi site generating a DNA molecule suitable for the initiation of homologous recombination. The AddA nuclease domain is required for chi fragment generation; this subunit has the helicase and 3' -&gt; 5' nuclease activities. The protein is ATP-dependent helicase/nuclease subunit A of Geobacillus thermodenitrificans (strain NG80-2).